Here is a 195-residue protein sequence, read N- to C-terminus: DnaJ homolog subfamily C member 5 (195 aa).

Residues 13 to 82 (GDSLYIVLGL…RNIYDKYGSL (70 aa)) enclose the J domain. The disordered stretch occupies residues 162–195 (DMEKEGDGAIVVQPTSATETTQLTSDSHPSYHTE). Positions 174–189 (QPTSATETTQLTSDSH) are enriched in polar residues.

In terms of processing, palmitoylated. Palmitoylation occurs probably in the cysteine-rich domain and regulates DNAJC5 stable membrane attachment.

It is found in the cytoplasm. It localises to the cytosol. The protein localises to the membrane. The protein resides in the cytoplasmic vesicle. Its subcellular location is the secretory vesicle. It is found in the chromaffin granule membrane. It localises to the melanosome. The protein localises to the cell membrane. May have an important role in presynaptic function. May be involved in calcium-dependent neurotransmitter release at nerve endings. This is DnaJ homolog subfamily C member 5 from Tetronarce californica (Pacific electric ray).